We begin with the raw amino-acid sequence, 273 residues long: Large ribosomal subunit protein uL2 (273 aa).

The disordered stretch occupies residues 224–263 (AMNPVDHPHGGGEGRNFGKHPVTPWGLQTKGKKTRKNKRT). Residues 253-263 (KGKKTRKNKRT) are compositionally biased toward basic residues.

Belongs to the universal ribosomal protein uL2 family. Part of the 50S ribosomal subunit. Forms a bridge to the 30S subunit in the 70S ribosome.

Its function is as follows. One of the primary rRNA binding proteins. Required for association of the 30S and 50S subunits to form the 70S ribosome, for tRNA binding and peptide bond formation. It has been suggested to have peptidyltransferase activity; this is somewhat controversial. Makes several contacts with the 16S rRNA in the 70S ribosome. In Buchnera aphidicola subsp. Schizaphis graminum (strain Sg), this protein is Large ribosomal subunit protein uL2.